The primary structure comprises 225 residues: Heptaprenylglyceryl phosphate synthase (225 aa).

Lysine 6 is a binding site for sn-glycerol 1-phosphate. Mg(2+) contacts are provided by aspartate 8 and threonine 34. Residues tyrosine 153–glycine 158, glycine 183, and glycine 203–asparagine 204 contribute to the sn-glycerol 1-phosphate site.

This sequence belongs to the GGGP/HepGP synthase family. Group I subfamily. Homodimer. It depends on Mg(2+) as a cofactor.

It carries out the reaction sn-glycerol 1-phosphate + all-trans-heptaprenyl diphosphate = 3-heptaprenyl-sn-glycero-1-phosphate + diphosphate. Its pathway is membrane lipid metabolism; glycerophospholipid metabolism. In terms of biological role, prenyltransferase that catalyzes in vivo the transfer of the heptaprenyl moiety of heptaprenyl pyrophosphate (HepPP; 35 carbon atoms) to the C3 hydroxyl of sn-glycerol-1-phosphate (G1P), producing heptaprenylglyceryl phosphate (HepGP). This reaction is an ether-bond-formation step in the biosynthesis of archaea-type G1P-based membrane lipids found in Bacillales. To a much lesser extent, is also able to use geranylgeranyl diphosphate (GGPP; C20) as the prenyl donor. This Listeria monocytogenes serovar 1/2a (strain ATCC BAA-679 / EGD-e) protein is Heptaprenylglyceryl phosphate synthase.